The sequence spans 185 residues: uncharacterized protein (185 aa).

The Nudix hydrolase domain occupies 39–177; sequence LWHASAGVLV…SWPFVPDSRA (139 aa). The Nudix box motif lies at 77–99; it reads GGVVDPGETPQETAIREVGEELG. E93 and E97 together coordinate Mg(2+).

This sequence belongs to the Nudix hydrolase family. Mg(2+) is required as a cofactor.

This is an uncharacterized protein from Rhodococcus erythropolis (Arthrobacter picolinophilus).